A 671-amino-acid chain; its full sequence is Anti-sigma-I factor RsgI2 (671 aa).

Residues 1 to 57 lie on the Cytoplasmic side of the membrane; that stretch reads MSHYTGIILKLESDRAIVLTDGLDFMELKLKPGMQRGQHVIFDESDLYSAGLITRYK. Positions 4–51 constitute a RsgI N-terminal anti-sigma domain; the sequence is YTGIILKLESDRAIVLTDGLDFMELKLKPGMQRGQHVIFDESDLYSAG. Residues 58–78 traverse the membrane as a helical segment; it reads SIIMPFSAFAAAAAVFLVILF. Residues 79–671 are Extracellular-facing; sequence SLRFVSISQE…SGTLYWGIEP (593 aa). Disordered regions lie at residues 290 to 323 and 359 to 505; these read TEAQ…IPHT and PVPV…APTE. A compositionally biased stretch (low complexity) spans 359 to 379; that stretch reads PVPVSTPKPVSTPAYSSTPTP. Pro residues predominate over residues 380-400; sequence ESTPVPVSTPKPASTPTPAST. Residues 401 to 425 show a composition bias toward low complexity; that stretch reads PKPVSTPTHVSTPKPISTPTSTPRP. The span at 426–446 shows a compositional bias: pro residues; the sequence is ASTPKPTSTPTPESTPKPTST. The segment covering 447–491 has biased composition (low complexity); it reads PAPVSTPTSTPIPTYTSTPASTPIPAYTSTPTSIPTLTPATSPAP. Pro residues predominate over residues 492–502; sequence TSSPTPIPSPA. A CBM3 domain is found at 508 to 671; it reads LLTKIELQAY…SGTLYWGIEP (164 aa). Thr554, Asp556, Asp637, Ser640, and Asp641 together coordinate Ca(2+).

As to quaternary structure, interacts (via RsgI N-terminal anti-sigma domain) with SigI2.

It localises to the cell membrane. In terms of biological role, anti-sigma factor for SigI2. Negatively regulates SigI2 activity through direct interaction. Binding of the polysaccharide substrate to the extracellular C-terminal sensing domain of RsgI2 may induce a conformational change in its N-terminal cytoplasmic region, leading to the release and activation of SigI2. The chain is Anti-sigma-I factor RsgI2 from Acetivibrio thermocellus (strain ATCC 27405 / DSM 1237 / JCM 9322 / NBRC 103400 / NCIMB 10682 / NRRL B-4536 / VPI 7372) (Clostridium thermocellum).